Consider the following 258-residue polypeptide: UPF0246 protein YaaA (258 aa).

It belongs to the UPF0246 family.

In Escherichia coli O8 (strain IAI1), this protein is UPF0246 protein YaaA.